We begin with the raw amino-acid sequence, 167 residues long: Gametocyte-specific factor 1 homolog (167 aa).

CHHC U11-48K-type zinc fingers lie at residues 1-28 and 34-61; these read MVYCPYNKEHKMLRKKLQQHILKCRVIY and LMVCPFNSSHLIPEPQFFQHTQSCEDRN. Residues Cys4, His10, His20, Cys24, Cys37, His43, His53, and Cys57 each contribute to the Zn(2+) site. Over residues 128–161 the composition is skewed to basic and acidic residues; it reads EKRRHFGEDYEEEKKPRKAKARADLRPTPYEHRR. A disordered region spans residues 128–167; sequence EKRRHFGEDYEEEKKPRKAKARADLRPTPYEHRRPYSRRQ.

It belongs to the UPF0224 (FAM112) family. In terms of assembly, interacts with piwi.

The protein resides in the nucleus. Functionally, acts via the piwi-interacting RNA (piRNA) pathway which mediates the repression of transposable elements during meiosis by forming complexes composed of piRNAs and piwi proteins and governs the methylation and subsequent repression of transposons. Required for repression of transposons and neighboring genes in ovarian somatic and germline cells. The polypeptide is Gametocyte-specific factor 1 homolog (Drosophila melanogaster (Fruit fly)).